Consider the following 252-residue polypeptide: Serine/threonine phosphatase stp (252 aa).

Basic and acidic residues predominate over residues 1–18; that stretch reads MHAEFRTDRGRIRHHNED. The tract at residues 1–23 is disordered; the sequence is MHAEFRTDRGRIRHHNEDNGGVF. The region spanning 2–242 is the PPM-type phosphatase domain; it reads HAEFRTDRGR…DNITVLLVER (241 aa). Mn(2+) is bound by residues aspartate 36, glycine 37, aspartate 194, and aspartate 233.

It belongs to the PP2C family. Mn(2+) serves as cofactor.

Its subcellular location is the cytoplasm. It localises to the membrane. The enzyme catalyses O-phospho-L-seryl-[protein] + H2O = L-seryl-[protein] + phosphate. It catalyses the reaction O-phospho-L-threonyl-[protein] + H2O = L-threonyl-[protein] + phosphate. Protein phosphatase that dephosphorylates EF-Tu. This Listeria monocytogenes serotype 4b (strain F2365) protein is Serine/threonine phosphatase stp (stp).